The primary structure comprises 315 residues: Methionyl-tRNA formyltransferase (315 aa).

Residue 113 to 116 (SLLP) coordinates (6S)-5,6,7,8-tetrahydrofolate.

The protein belongs to the Fmt family.

It catalyses the reaction L-methionyl-tRNA(fMet) + (6R)-10-formyltetrahydrofolate = N-formyl-L-methionyl-tRNA(fMet) + (6S)-5,6,7,8-tetrahydrofolate + H(+). Attaches a formyl group to the free amino group of methionyl-tRNA(fMet). The formyl group appears to play a dual role in the initiator identity of N-formylmethionyl-tRNA by promoting its recognition by IF2 and preventing the misappropriation of this tRNA by the elongation apparatus. The chain is Methionyl-tRNA formyltransferase from Escherichia coli O139:H28 (strain E24377A / ETEC).